The primary structure comprises 231 residues: Protein OPG061 (231 aa).

The protein belongs to the orthopoxvirus OPG058 family.

It is found in the host nucleus. Its subcellular location is the host nucleolus. The chain is Protein OPG061 (OPG061) from Vaccinia virus (strain L-IVP) (VACV).